The primary structure comprises 434 residues: Ribosomal protein uS12 methylthiotransferase RimO (434 aa).

The 119-residue stretch at 4–122 (NRVDVITLGC…LISHLGKSYY (119 aa)) folds into the MTTase N-terminal domain. [4Fe-4S] cluster-binding residues include Cys-13, Cys-51, Cys-85, Cys-146, Cys-150, and Cys-153. The Radical SAM core domain occupies 132-363 (TTPRHYAYLK…MAVQERISAA (232 aa)). Positions 366–434 (EAKIGSRLRV…PFDLYARIVD (69 aa)) constitute a TRAM domain.

Belongs to the methylthiotransferase family. RimO subfamily. [4Fe-4S] cluster is required as a cofactor.

It localises to the cytoplasm. It carries out the reaction L-aspartate(89)-[ribosomal protein uS12]-hydrogen + (sulfur carrier)-SH + AH2 + 2 S-adenosyl-L-methionine = 3-methylsulfanyl-L-aspartate(89)-[ribosomal protein uS12]-hydrogen + (sulfur carrier)-H + 5'-deoxyadenosine + L-methionine + A + S-adenosyl-L-homocysteine + 2 H(+). Catalyzes the methylthiolation of an aspartic acid residue of ribosomal protein uS12. This is Ribosomal protein uS12 methylthiotransferase RimO from Porphyromonas gingivalis (strain ATCC 33277 / DSM 20709 / CIP 103683 / JCM 12257 / NCTC 11834 / 2561).